We begin with the raw amino-acid sequence, 555 residues long: Dihydroxy-acid dehydratase (555 aa).

Mg(2+) is bound at residue D78. C119 is a binding site for [2Fe-2S] cluster. Mg(2+)-binding residues include D120 and K121. K121 bears the N6-carboxylysine mark. C192 provides a ligand contact to [2Fe-2S] cluster. E444 is a binding site for Mg(2+). S470 serves as the catalytic Proton acceptor.

It belongs to the IlvD/Edd family. In terms of assembly, homodimer. [2Fe-2S] cluster serves as cofactor. The cofactor is Mg(2+).

The enzyme catalyses (2R)-2,3-dihydroxy-3-methylbutanoate = 3-methyl-2-oxobutanoate + H2O. It catalyses the reaction (2R,3R)-2,3-dihydroxy-3-methylpentanoate = (S)-3-methyl-2-oxopentanoate + H2O. It functions in the pathway amino-acid biosynthesis; L-isoleucine biosynthesis; L-isoleucine from 2-oxobutanoate: step 3/4. It participates in amino-acid biosynthesis; L-valine biosynthesis; L-valine from pyruvate: step 3/4. Functions in the biosynthesis of branched-chain amino acids. Catalyzes the dehydration of (2R,3R)-2,3-dihydroxy-3-methylpentanoate (2,3-dihydroxy-3-methylvalerate) into 2-oxo-3-methylpentanoate (2-oxo-3-methylvalerate) and of (2R)-2,3-dihydroxy-3-methylbutanoate (2,3-dihydroxyisovalerate) into 2-oxo-3-methylbutanoate (2-oxoisovalerate), the penultimate precursor to L-isoleucine and L-valine, respectively. The chain is Dihydroxy-acid dehydratase from Halalkalibacterium halodurans (strain ATCC BAA-125 / DSM 18197 / FERM 7344 / JCM 9153 / C-125) (Bacillus halodurans).